Consider the following 477-residue polypeptide: UDP-N-acetylmuramate--L-alanine ligase (477 aa).

112–118 is an ATP binding site; sequence GAHGKTT.

The protein belongs to the MurCDEF family.

It localises to the cytoplasm. It carries out the reaction UDP-N-acetyl-alpha-D-muramate + L-alanine + ATP = UDP-N-acetyl-alpha-D-muramoyl-L-alanine + ADP + phosphate + H(+). It participates in cell wall biogenesis; peptidoglycan biosynthesis. Functionally, cell wall formation. This chain is UDP-N-acetylmuramate--L-alanine ligase, found in Acidovorax ebreus (strain TPSY) (Diaphorobacter sp. (strain TPSY)).